Here is a 308-residue protein sequence, read N- to C-terminus: Ribonuclease HIII (308 aa).

Residues 92–308 (DNHIGSDEAG…ANTQKAQKLL (217 aa)) form the RNase H type-2 domain. A divalent metal cation-binding residues include D98, E99, and D204.

It belongs to the RNase HII family. RnhC subfamily. The cofactor is Mn(2+). Requires Mg(2+) as cofactor.

The protein localises to the cytoplasm. The catalysed reaction is Endonucleolytic cleavage to 5'-phosphomonoester.. Its function is as follows. Endonuclease that specifically degrades the RNA of RNA-DNA hybrids. In Oceanobacillus iheyensis (strain DSM 14371 / CIP 107618 / JCM 11309 / KCTC 3954 / HTE831), this protein is Ribonuclease HIII.